The primary structure comprises 115 residues: uncharacterized protein (115 aa).

The HTH arsR-type domain occupies Met-1 to Ser-91. Positions Ala-30–Asp-53 form a DNA-binding region, H-T-H motif.

Its function is as follows. Essential for virus function. This is an uncharacterized protein from Saccharolobus solfataricus (Sulfolobus solfataricus).